The chain runs to 296 residues: 4-hydroxybenzoate octaprenyltransferase (296 aa).

Helical transmembrane passes span 29-49 (AGWLLLLWPTLSALWVAAGGF), 52-72 (WHLLSVFTLGTILMRSAGCCI), 103-123 (LVLGAVLALLAFALVLTTNAI), 151-171 (VLGVAFGMGIPMAFAAVLGEV), 176-196 (WLLMLGNLFWVLAYDTEYAMV), 220-240 (VILLCYLAFIVIWDVALMPYV), 243-263 (ALFTIAFALAFGQVAWHYTLI), and 275-295 (FRLNHWLGFTLFVGIAGSYAL).

This sequence belongs to the UbiA prenyltransferase family. Mg(2+) serves as cofactor.

Its subcellular location is the cell inner membrane. It catalyses the reaction all-trans-octaprenyl diphosphate + 4-hydroxybenzoate = 4-hydroxy-3-(all-trans-octaprenyl)benzoate + diphosphate. It participates in cofactor biosynthesis; ubiquinone biosynthesis. In terms of biological role, catalyzes the prenylation of para-hydroxybenzoate (PHB) with an all-trans polyprenyl group. Mediates the second step in the final reaction sequence of ubiquinone-8 (UQ-8) biosynthesis, which is the condensation of the polyisoprenoid side chain with PHB, generating the first membrane-bound Q intermediate 3-octaprenyl-4-hydroxybenzoate. The chain is 4-hydroxybenzoate octaprenyltransferase from Albidiferax ferrireducens (strain ATCC BAA-621 / DSM 15236 / T118) (Rhodoferax ferrireducens).